The sequence spans 35 residues: VNYGNGVSCSKTKCSVNWGIITHQAFRVTSGVASG.

The protein belongs to the bacteriocin class IIA/YGNGV family.

The protein localises to the secreted. Functionally, bacteriocin with antibacterial activity against C.jejuni. This chain is Bacteriocin SRCAM 1580, found in Niallia circulans (Bacillus circulans).